The following is a 475-amino-acid chain: Ribulose bisphosphate carboxylase large chain (475 aa).

Residues methionine 1–serine 2 constitute a propeptide that is removed on maturation. Proline 3 bears the N-acetylproline mark. Lysine 14 carries the post-translational modification N6,N6,N6-trimethyllysine. Residues asparagine 123 and threonine 173 each contribute to the substrate site. The active-site Proton acceptor is the lysine 175. Residue lysine 177 coordinates substrate. Positions 201, 203, and 204 each coordinate Mg(2+). Position 201 is an N6-carboxylysine (lysine 201). Catalysis depends on histidine 294, which acts as the Proton acceptor. Residues arginine 295, histidine 327, and serine 379 each coordinate substrate.

Belongs to the RuBisCO large chain family. Type I subfamily. As to quaternary structure, heterohexadecamer of 8 large chains and 8 small chains; disulfide-linked. The disulfide link is formed within the large subunit homodimers. Mg(2+) serves as cofactor. In terms of processing, the disulfide bond which can form in the large chain dimeric partners within the hexadecamer appears to be associated with oxidative stress and protein turnover.

The protein resides in the plastid. The protein localises to the chloroplast. The enzyme catalyses 2 (2R)-3-phosphoglycerate + 2 H(+) = D-ribulose 1,5-bisphosphate + CO2 + H2O. It catalyses the reaction D-ribulose 1,5-bisphosphate + O2 = 2-phosphoglycolate + (2R)-3-phosphoglycerate + 2 H(+). Its function is as follows. RuBisCO catalyzes two reactions: the carboxylation of D-ribulose 1,5-bisphosphate, the primary event in carbon dioxide fixation, as well as the oxidative fragmentation of the pentose substrate in the photorespiration process. Both reactions occur simultaneously and in competition at the same active site. This Carica papaya (Papaya) protein is Ribulose bisphosphate carboxylase large chain.